We begin with the raw amino-acid sequence, 100 residues long: NADH-quinone oxidoreductase subunit K (100 aa).

Helical transmembrane passes span 4–24, 28–48, and 60–80; these read LQHGLILAAILFVLGLTGLVI, LLFMLIGLEIMINAAALAFVV, and IMYILAISLAAAEASIGLALL.

It belongs to the complex I subunit 4L family. NDH-1 is composed of 13 different subunits. Subunits NuoA, H, J, K, L, M, N constitute the membrane sector of the complex.

It is found in the cell inner membrane. It catalyses the reaction a quinone + NADH + 5 H(+)(in) = a quinol + NAD(+) + 4 H(+)(out). Functionally, NDH-1 shuttles electrons from NADH, via FMN and iron-sulfur (Fe-S) centers, to quinones in the respiratory chain. The immediate electron acceptor for the enzyme in this species is believed to be ubiquinone. Couples the redox reaction to proton translocation (for every two electrons transferred, four hydrogen ions are translocated across the cytoplasmic membrane), and thus conserves the redox energy in a proton gradient. In Cronobacter sakazakii (strain ATCC BAA-894) (Enterobacter sakazakii), this protein is NADH-quinone oxidoreductase subunit K.